A 222-amino-acid polypeptide reads, in one-letter code: Sugar fermentation stimulation protein homolog (222 aa).

Belongs to the SfsA family.

The protein is Sugar fermentation stimulation protein homolog of Thermotoga maritima (strain ATCC 43589 / DSM 3109 / JCM 10099 / NBRC 100826 / MSB8).